The chain runs to 98 residues: Cystatin-A (98 aa).

Met-1 carries the post-translational modification N-acetylmethionine. Residues 46–50 (QVVAG) carry the Secondary area of contact motif.

This sequence belongs to the cystatin family.

The protein localises to the cytoplasm. In terms of biological role, this is an intracellular thiol proteinase inhibitor. In Felis catus (Cat), this protein is Cystatin-A (CSTA).